A 325-amino-acid polypeptide reads, in one-letter code: Foldase protein PrsA (325 aa).

The signal sequence occupies residues 1–20 (MKLMNKIIVPVTASALLLGA). The N-palmitoyl cysteine moiety is linked to residue Cys21. Cys21 carries the S-diacylglycerol cysteine lipid modification. Residues 139–245 (ENSKKASHIL…YGYHIIKADK (107 aa)) form the PpiC domain. 2 disordered regions span residues 159-202 (EGLS…KKDG) and 303-325 (PDKI…NSGS).

This sequence belongs to the PrsA family.

The protein resides in the cell membrane. It catalyses the reaction [protein]-peptidylproline (omega=180) = [protein]-peptidylproline (omega=0). Functionally, plays a major role in protein secretion by helping the post-translocational extracellular folding of several secreted proteins. The chain is Foldase protein PrsA from Staphylococcus epidermidis (strain ATCC 12228 / FDA PCI 1200).